The sequence spans 211 residues: Thiamine-phosphate synthase (211 aa).

4-amino-2-methyl-5-(diphosphooxymethyl)pyrimidine is bound by residues 37-41 and Asn-69; that span reads QLRIK. Residues Asp-70 and Asp-89 each contribute to the Mg(2+) site. Ser-108 is a binding site for 4-amino-2-methyl-5-(diphosphooxymethyl)pyrimidine. A 2-[(2R,5Z)-2-carboxy-4-methylthiazol-5(2H)-ylidene]ethyl phosphate-binding site is contributed by 134–136; the sequence is TQT. Lys-137 serves as a coordination point for 4-amino-2-methyl-5-(diphosphooxymethyl)pyrimidine. Residues Gly-166 and 186-187 each bind 2-[(2R,5Z)-2-carboxy-4-methylthiazol-5(2H)-ylidene]ethyl phosphate; that span reads VS.

The protein belongs to the thiamine-phosphate synthase family. Mg(2+) serves as cofactor.

It catalyses the reaction 2-[(2R,5Z)-2-carboxy-4-methylthiazol-5(2H)-ylidene]ethyl phosphate + 4-amino-2-methyl-5-(diphosphooxymethyl)pyrimidine + 2 H(+) = thiamine phosphate + CO2 + diphosphate. The catalysed reaction is 2-(2-carboxy-4-methylthiazol-5-yl)ethyl phosphate + 4-amino-2-methyl-5-(diphosphooxymethyl)pyrimidine + 2 H(+) = thiamine phosphate + CO2 + diphosphate. The enzyme catalyses 4-methyl-5-(2-phosphooxyethyl)-thiazole + 4-amino-2-methyl-5-(diphosphooxymethyl)pyrimidine + H(+) = thiamine phosphate + diphosphate. Its pathway is cofactor biosynthesis; thiamine diphosphate biosynthesis; thiamine phosphate from 4-amino-2-methyl-5-diphosphomethylpyrimidine and 4-methyl-5-(2-phosphoethyl)-thiazole: step 1/1. In terms of biological role, condenses 4-methyl-5-(beta-hydroxyethyl)thiazole monophosphate (THZ-P) and 2-methyl-4-amino-5-hydroxymethyl pyrimidine pyrophosphate (HMP-PP) to form thiamine monophosphate (TMP). In Salmonella paratyphi A (strain ATCC 9150 / SARB42), this protein is Thiamine-phosphate synthase.